A 454-amino-acid polypeptide reads, in one-letter code: MTKSQVNTWGPAISSPAELTVIIVGLGIAGLTAAIECHRKGYTVIGLEKKPDANQLGDIIGLSGNSMRILAEWNNGSLAHLIDDDITCDVTALELFDAEGHQRLAMPYNANDPNQGYLFRRTGLLTKLCHYASQLGIDLRFGVNVDGYWETDSSAGVYANNEKITGDCVVAADGFHSKARAIITGETPAPEDIGVVAYRSIFDADAIADVPEAQWILKKAQTADIWHTYYAKDTMVAIGTAARGRYVHWGCAGALEDRSESWMQPAAPYPVLKCLESWPVGGQLAAAIARTPPGKCFQQALRAIPPLKRWVSTGGRMIVIGDAAHSFLPYAGQGGNQAIEDAAVLGICLELAGTPNVPLALRVVEKLRHGRVSLIQKGSVEAGDCFLDAAWESDDTAERPTAFTHQAWVYAHNCVEHAYKQFHAAAEAVINGREYTPTNVPTDGKFRQQDGKCM.

The chain crosses the membrane as a helical span at residues Ser15–Ile35. Positions 48 and 61 each coordinate FAD. N-linked (GlcNAc...) asparagine glycosylation occurs at Asn75. Arg121 serves as a coordination point for FAD. Residues Arg199 and Tyr229 contribute to the active site. FAD-binding residues include Asp322 and Gly335.

It belongs to the paxM FAD-dependent monooxygenase family. It depends on FAD as a cofactor.

It is found in the membrane. The catalysed reaction is notoamide E + NADPH + O2 + H(+) = notoamide C + NADP(+) + H2O. It carries out the reaction notoamide E + NADPH + O2 + H(+) = notoamide D + NADP(+) + H2O. Its pathway is alkaloid biosynthesis. Functionally, FAD-dependent monooxygenase; part of the gene cluster that mediates the biosynthesis of notoamide, a fungal indole alkaloid that belongs to a family of natural products containing a characteristic bicyclo[2.2.2]diazaoctane core. The first step of notoamide biosynthesis involves coupling of L-proline and L-tryptophan by the bimodular NRPS notE, to produce cyclo-L-tryptophan-L-proline called brevianamide F. The reverse prenyltransferase notF then acts as a deoxybrevianamide E synthase and converts brevianamide F to deoxybrevianamide E via reverse prenylation at C-2 of the indole ring leading to the bicyclo[2.2.2]diazaoctane core. Deoxybrevianamide E is further hydroxylated at C-6 of the indole ring, likely catalyzed by the cytochrome P450 monooxygenase notG, to yield 6-hydroxy-deoxybrevianamide E. 6-hydroxy-deoxybrevianamide E is a specific substrate of the prenyltransferase notC for normal prenylation at C-7 to produce 6-hydroxy-7-prenyl-deoxybrevianamide, also called notoamide S. As the proposed pivotal branching point in notoamide biosynthesis, notoamide S can be diverted to notoamide E through an oxidative pyran ring closure putatively catalyzed by either notH cytochrome P450 monooxygenase or the notD FAD-linked oxidoreductase. This step would be followed by an indole 2,3-epoxidation-initiated pinacol-like rearrangement catalyzed by the notB FAD-dependent monooxygenase leading to the formation of notoamide C and notoamide D. On the other hand notoamide S is converted to notoamide T by notH (or notD), a bifunctional oxidase that also functions as the intramolecular Diels-Alderase responsible for generation of (+)-notoamide T. To generate antipodal (-)-notoaminide T, notH' (or notD') in Aspergillus versicolor is expected to catalyze a Diels-Alder reaction leading to the opposite stereochemistry. The remaining oxidoreductase notD (or notH) likely catalyzes the oxidative pyran ring formation to yield (+)-stephacidin A. The FAD-dependent monooxygenase notI is highly similar to notB and is predicted to catalyze a similar conversion from (+)-stephacidin A to (-)-notoamide B via the 2,3-epoxidation of (+)-stephacidin A followed by a pinacol-type rearrangement. Finally, it remains unclear which enzyme could be responsible for the final hydroxylation steps leading to notoamide A and sclerotiamide. The polypeptide is Notoamide E oxidase notB (Aspergillus sp. (strain MF297-2)).